The primary structure comprises 393 residues: Phosphoglycerate kinase (393 aa).

Substrate contacts are provided by residues 21 to 23 (DFN), Arg-37, 60 to 63 (HLGR), Arg-119, and Arg-152. ATP-binding positions include Lys-202, Glu-323, and 349 to 352 (GGDT).

It belongs to the phosphoglycerate kinase family. In terms of assembly, monomer.

Its subcellular location is the cytoplasm. It carries out the reaction (2R)-3-phosphoglycerate + ATP = (2R)-3-phospho-glyceroyl phosphate + ADP. It participates in carbohydrate degradation; glycolysis; pyruvate from D-glyceraldehyde 3-phosphate: step 2/5. The protein is Phosphoglycerate kinase of Desulforudis audaxviator (strain MP104C).